The sequence spans 554 residues: Cytochrome P450 monooxygenase himC (554 aa).

The helical transmembrane segment at 52 to 72 (YSVASVAIAGFTALVVSVALY) threads the bilayer. Asn-110, Asn-328, Asn-414, and Asn-425 each carry an N-linked (GlcNAc...) asparagine glycan. Cys-501 provides a ligand contact to heme.

The protein belongs to the cytochrome P450 family. Heme is required as a cofactor.

It is found in the membrane. The protein operates within secondary metabolite biosynthesis. Cytochrome P450 monooxygenase; part of the him gene cluster that mediates the biosynthesis of himeic acid A, a ubiquitin-activating enzyme (E1) inhibitor. First, himA, together with the trans-enoyl reductase himH, catalyzes the formation of apolyketide chain, which is then condensed with leucine by the NRPS activity of himA. Dieckmann cyclization and release from himA gives a tetramic acid intermediate as the product of himA PKS-NRPS. HimG then catalyzes alpha-oxidation of the tetramic acid ring, with a subsequent rearrangement to yield apyrone intermediate. Two terminal methyl groups of polyketide and amide side chains are oxidized to carboxylic acids by himC cytochrome P450 monooxygenase to form himeic acid A. Himeic acid A is further converted to himeic acid B and C during culture growth. No gene responsible for pyrone to pyridone conversion was found in the him gene cluster and himeic acid A is non-enzymatically converted to himeic acid C by the incorporation of an ammonium nitrogen atom in a pH5 buffer, and to himeic acid B at a conversion ratio of 50% during incubation in MeOH for 5 days. This chain is Cytochrome P450 monooxygenase himC, found in Aspergillus japonicus.